The sequence spans 241 residues: 2-C-methyl-D-erythritol 4-phosphate cytidylyltransferase (241 aa).

This sequence belongs to the IspD/TarI cytidylyltransferase family. IspD subfamily.

The catalysed reaction is 2-C-methyl-D-erythritol 4-phosphate + CTP + H(+) = 4-CDP-2-C-methyl-D-erythritol + diphosphate. It participates in isoprenoid biosynthesis; isopentenyl diphosphate biosynthesis via DXP pathway; isopentenyl diphosphate from 1-deoxy-D-xylulose 5-phosphate: step 2/6. Its function is as follows. Catalyzes the formation of 4-diphosphocytidyl-2-C-methyl-D-erythritol from CTP and 2-C-methyl-D-erythritol 4-phosphate (MEP). The chain is 2-C-methyl-D-erythritol 4-phosphate cytidylyltransferase from Alkaliphilus metalliredigens (strain QYMF).